Reading from the N-terminus, the 364-residue chain is Aminomethyltransferase (364 aa).

This sequence belongs to the GcvT family. In terms of assembly, the glycine cleavage system is composed of four proteins: P, T, L and H.

The enzyme catalyses N(6)-[(R)-S(8)-aminomethyldihydrolipoyl]-L-lysyl-[protein] + (6S)-5,6,7,8-tetrahydrofolate = N(6)-[(R)-dihydrolipoyl]-L-lysyl-[protein] + (6R)-5,10-methylene-5,6,7,8-tetrahydrofolate + NH4(+). The glycine cleavage system catalyzes the degradation of glycine. This chain is Aminomethyltransferase, found in Salmonella dublin (strain CT_02021853).